A 422-amino-acid chain; its full sequence is Dihydrolipoyllysine-residue succinyltransferase component of 2-oxoglutarate dehydrogenase complex (422 aa).

In terms of domain architecture, Lipoyl-binding spans 1-76; it reads MPEVKVPELA…EVGQAIAIIG (76 aa). The residue at position 42 (K42) is an N6-lipoyllysine. The interval 77-185 is disordered; it reads EGSGNASKEN…SAKEEKKYNQ (109 aa). 2 stretches are compositionally biased toward polar residues: residues 80-94 and 116-130; these read GNAS…TPQQ and NQAN…NATP. Residues 127–163 enclose the Peripheral subunit-binding (PSBD) domain; sequence NATPSARRYARENGVNLAEVSPKTNDVVRKEDIDKKQ. The segment covering 152-163 has biased composition (basic and acidic residues); sequence DVVRKEDIDKKQ. The span at 164–176 shows a compositional bias: low complexity; sequence QAPASTQTTQQAS. Catalysis depends on residues H393 and D397.

This sequence belongs to the 2-oxoacid dehydrogenase family. As to quaternary structure, forms a 24-polypeptide structural core with octahedral symmetry. Part of the 2-oxoglutarate dehydrogenase (OGDH) complex composed of E1 (2-oxoglutarate dehydrogenase), E2 (dihydrolipoamide succinyltransferase) and E3 (dihydrolipoamide dehydrogenase); the complex contains multiple copies of the three enzymatic components (E1, E2 and E3). Requires (R)-lipoate as cofactor.

The catalysed reaction is N(6)-[(R)-dihydrolipoyl]-L-lysyl-[protein] + succinyl-CoA = N(6)-[(R)-S(8)-succinyldihydrolipoyl]-L-lysyl-[protein] + CoA. Its pathway is amino-acid degradation; L-lysine degradation via saccharopine pathway; glutaryl-CoA from L-lysine: step 6/6. In terms of biological role, E2 component of the 2-oxoglutarate dehydrogenase (OGDH) complex which catalyzes the second step in the conversion of 2-oxoglutarate to succinyl-CoA and CO(2). The polypeptide is Dihydrolipoyllysine-residue succinyltransferase component of 2-oxoglutarate dehydrogenase complex (odhB) (Staphylococcus aureus (strain USA300)).